Reading from the N-terminus, the 393-residue chain is S-adenosylmethionine synthase (393 aa).

Histidine 16 contributes to the ATP binding site. Aspartate 18 lines the Mg(2+) pocket. Glutamate 44 contacts K(+). Positions 57 and 100 each coordinate L-methionine. The flexible loop stretch occupies residues 100 to 110; that stretch reads QSNDIAQGVDH. Residues 167–169, 238–239, aspartate 247, 253–254, alanine 270, and lysine 274 each bind ATP; these read DAK, RF, and RK. Aspartate 247 contacts L-methionine. Lysine 278 provides a ligand contact to L-methionine.

It belongs to the AdoMet synthase family. Homotetramer; dimer of dimers. Mg(2+) is required as a cofactor. Requires K(+) as cofactor.

The protein localises to the cytoplasm. The catalysed reaction is L-methionine + ATP + H2O = S-adenosyl-L-methionine + phosphate + diphosphate. It participates in amino-acid biosynthesis; S-adenosyl-L-methionine biosynthesis; S-adenosyl-L-methionine from L-methionine: step 1/1. Its function is as follows. Catalyzes the formation of S-adenosylmethionine (AdoMet) from methionine and ATP. The overall synthetic reaction is composed of two sequential steps, AdoMet formation and the subsequent tripolyphosphate hydrolysis which occurs prior to release of AdoMet from the enzyme. This Albidiferax ferrireducens (strain ATCC BAA-621 / DSM 15236 / T118) (Rhodoferax ferrireducens) protein is S-adenosylmethionine synthase.